Consider the following 151-residue polypeptide: UPF0561 protein C2orf68 homolog (151 aa).

Residues 1–89 (MEEEGEAQGR…TLKDEPNDNG (89 aa)) are disordered. Basic and acidic residues-rich tracts occupy residues 32–46 (LARD…QAKE) and 70–85 (RQRE…KDEP).

It belongs to the UPF0561 family.

In Xenopus laevis (African clawed frog), this protein is UPF0561 protein C2orf68 homolog.